We begin with the raw amino-acid sequence, 462 residues long: O-methyltransferase CTB2 (462 aa).

Residue D289 coordinates S-adenosyl-L-methionine. The Proton acceptor role is filled by H340.

This sequence belongs to the class I-like SAM-binding methyltransferase superfamily. Cation-independent O-methyltransferase family. COMT subfamily.

It participates in mycotoxin biosynthesis. O-methyltransferase; part of the gene cluster that mediates the biosynthesis of cercosporin, a light-activated, non-host-selective toxin. The perylenequinone chromophore of cercosporin absorbs light energy to attain an electronically-activated triplet state and produces active oxygen species such as the hydroxyl radical, superoxide, hydrogen peroxide or singlet oxygen upon reaction with oxygen molecules. These reactive oxygen species cause damage to various cellular components including lipids, proteins and nucleic acids. The first step of cercosporin biosynthesis is performed by the polyketide synthase CTB1 which catalyzes the formation of nor-toralactone. The starter unit acyltransferase (SAT) domain of CTB1 initiates polyketide extension by the selective utilization of acetyl-CoA, which is elongated to the heptaketide in the beta-ketoacyl synthase (KS) domain by successive condensations with six malonyl units introduced by the malonyl acyltransferase (MAT) domain. The product template (PT) domain catalyzes C4-C9 and C2-C11 aldol cyclizations and dehydrations to a trihydroxynaphthalene, which is thought to be delivered to the thioesterase (TE) domain for product release. The bifunctional enzyme CTB3 then methylates nor-toralactone to toralactone before conducting an unusual oxidative aromatic ring opening. The O-methyltransferase CTB2 further methylates the nascent OH-6 of the CBT3 product, blocking further oxidation at this site before the reductase CTB6 reduces the 2-oxopropyl ketone at position C7, giving naphthalene. The FAD-dependent monooxygenase CTB5 in concert with the multicopper oxidase CTB12 are responsible for homodimerization of naphthalene with CTB7 installing the dioxepine moiety, finally producing cercosporin. The fasciclin domain-containing protein CTB11 might act with CTB5 and CTB12 whereas the roles of CTB9 and CTB10 have still to be elucidated. The polypeptide is O-methyltransferase CTB2 (Cercospora beticola (Sugarbeet leaf spot fungus)).